Reading from the N-terminus, the 293-residue chain is tRNA-cytidine(32) 2-sulfurtransferase (293 aa).

The PP-loop motif signature appears at 62–67 (SGGKDS). Cysteine 137, cysteine 140, and cysteine 228 together coordinate [4Fe-4S] cluster.

It belongs to the TtcA family. Homodimer. Mg(2+) is required as a cofactor. The cofactor is [4Fe-4S] cluster.

The protein localises to the cytoplasm. It catalyses the reaction cytidine(32) in tRNA + S-sulfanyl-L-cysteinyl-[cysteine desulfurase] + AH2 + ATP = 2-thiocytidine(32) in tRNA + L-cysteinyl-[cysteine desulfurase] + A + AMP + diphosphate + H(+). It functions in the pathway tRNA modification. Functionally, catalyzes the ATP-dependent 2-thiolation of cytidine in position 32 of tRNA, to form 2-thiocytidine (s(2)C32). The sulfur atoms are provided by the cysteine/cysteine desulfurase (IscS) system. The protein is tRNA-cytidine(32) 2-sulfurtransferase of Brucella abortus (strain S19).